The primary structure comprises 173 residues: MSTSAVLFLLLAVFAAGASAATFNIKNNCGSTIWPAGIPVGGGFELGSGQTSSINVPAGTQAGRIWARTGCSFNGGSGSCQTGDCGGQLSCSLSGQPPATLAEFTIGGGSTQDFYDISVIDGFNLAMDFSCSTGDALQCRDPSCPPPQAYQHPNDVATHACSGNNNYQITFCP.

Residues 1 to 20 (MSTSAVLFLLLAVFAAGASA) form the signal peptide.

This sequence belongs to the thaumatin family.

This Hordeum vulgare (Barley) protein is Pathogenesis-related protein 1A/1B.